A 358-amino-acid polypeptide reads, in one-letter code: MSIQVENIRKAFGDFVALNDISLNFPGGELVALLGPSGCGKTTLLRIIAGLEQADAGRVLLDGQDASATHVRERQVGFVFQHYALFRHMTVFDNVAFGLRMKPRRERPSEAEIARKVHALLDLVQLDWLADRLPAQLSGGQRQRIALARALAVEPRVLLLDEPFGALDAKVRKELRRWLRKLHDELHITSLFVTHDQEEALEVADRVVLMNHGKVEQIGSPAEVYSQPASAFVYGFLGSANRIRGVSATGAVAVGGQTLAADHQLPHGQPVEAFIRPHELAILPEHGAGLPARVQRVLTLGGLSRIELEGRDELAGQSFDAELPADAPLLAELAVGQAVRLQARAARVFAADPQGGEA.

One can recognise an ABC transporter domain in the interval 3–237; sequence IQVENIRKAF…PASAFVYGFL (235 aa). ATP is bound at residue 35–42; the sequence is GPSGCGKT.

The protein belongs to the ABC transporter superfamily. Sulfate/tungstate importer (TC 3.A.1.6) family. The complex is composed of two ATP-binding proteins (CysA), two transmembrane proteins (CysT and CysW) and a solute-binding protein (CysP).

Its subcellular location is the cell inner membrane. It carries out the reaction sulfate(out) + ATP + H2O = sulfate(in) + ADP + phosphate + H(+). The catalysed reaction is thiosulfate(out) + ATP + H2O = thiosulfate(in) + ADP + phosphate + H(+). In terms of biological role, part of the ABC transporter complex CysAWTP involved in sulfate/thiosulfate import. Responsible for energy coupling to the transport system. This is Sulfate/thiosulfate import ATP-binding protein CysA 1 from Chromobacterium violaceum (strain ATCC 12472 / DSM 30191 / JCM 1249 / CCUG 213 / NBRC 12614 / NCIMB 9131 / NCTC 9757 / MK).